We begin with the raw amino-acid sequence, 436 residues long: Trigger factor (436 aa).

Positions Gly162–Pro247 constitute a PPIase FKBP-type domain.

It belongs to the FKBP-type PPIase family. Tig subfamily.

The protein resides in the cytoplasm. It catalyses the reaction [protein]-peptidylproline (omega=180) = [protein]-peptidylproline (omega=0). In terms of biological role, involved in protein export. Acts as a chaperone by maintaining the newly synthesized protein in an open conformation. Functions as a peptidyl-prolyl cis-trans isomerase. The chain is Trigger factor from Neisseria meningitidis serogroup C (strain 053442).